The primary structure comprises 153 residues: Ribosome maturation factor RimP (153 aa).

The protein belongs to the RimP family.

Its subcellular location is the cytoplasm. Functionally, required for maturation of 30S ribosomal subunits. The sequence is that of Ribosome maturation factor RimP from Marinobacter nauticus (strain ATCC 700491 / DSM 11845 / VT8) (Marinobacter aquaeolei).